The sequence spans 251 residues: Diphthine synthase (251 aa).

S-adenosyl-L-methionine contacts are provided by residues Leu9, Asp84, Val87, 112-113 (SI), Leu160, Ala194, and His219.

It belongs to the diphthine synthase family. Homodimer.

The catalysed reaction is 2-[(3S)-amino-3-carboxypropyl]-L-histidyl-[translation elongation factor 2] + 3 S-adenosyl-L-methionine = diphthine-[translation elongation factor 2] + 3 S-adenosyl-L-homocysteine + 3 H(+). The protein operates within protein modification; peptidyl-diphthamide biosynthesis. S-adenosyl-L-methionine-dependent methyltransferase that catalyzes the trimethylation of the amino group of the modified target histidine residue in translation elongation factor 2 (EF-2), to form an intermediate called diphthine. The three successive methylation reactions represent the second step of diphthamide biosynthesis. This chain is Diphthine synthase, found in Archaeoglobus fulgidus (strain ATCC 49558 / DSM 4304 / JCM 9628 / NBRC 100126 / VC-16).